The sequence spans 181 residues: Adenylate kinase (181 aa).

10–15 contacts ATP; sequence GAGKGT. The segment at 30–59 is NMP; it reads STGDLFRDNITNETELGVEAKRYLDAGDLV. Residues Thr31, Arg36, 57-59, 85-88, and Gln92 each bind AMP; these read DLV and GYPR. The tract at residues 126–132 is LID; the sequence is GRGRADD. Arg127 lines the ATP pocket. Positions 129 and 140 each coordinate AMP. Gly166 provides a ligand contact to ATP.

Belongs to the adenylate kinase family. Monomer.

The protein localises to the cytoplasm. The catalysed reaction is AMP + ATP = 2 ADP. Its pathway is purine metabolism; AMP biosynthesis via salvage pathway; AMP from ADP: step 1/1. In terms of biological role, catalyzes the reversible transfer of the terminal phosphate group between ATP and AMP. Plays an important role in cellular energy homeostasis and in adenine nucleotide metabolism. The polypeptide is Adenylate kinase (Mycobacterium sp. (strain MCS)).